Consider the following 756-residue polypeptide: MLGICRGRRKFLAASLTLLCIPAITWIYLFAGSFEDGKPVSLSPLESQAHSPRYTASSQRERESLEVRVREVEEENRALRRQLSLAQGQSPAHHRGNHSKTYSMEEGTGDSENLRAGIVAGNSSECGQQPAVEKCETIHVAIVCAGYNASRDVVTLVKSVLFHRRNPLHFHLIADSIAEQILATLFQTWMVPAVRVDFYNADELKSEVSWIPNKHYSGIYGLMKLVLTKTLPANLERVIVLDTDITFATDIAELWAVFHKFKGQQVLGLVENQSDWYLGNLWKNHRPWPALGRGYNTGVILLLLDKLRKMKWEQMWRLTAERELMGMLSTSLADQDIFNAVIKQNPFLVYQLPCFWNVQLSDHTRSEQCYRDVSDLKVIHWNSPKKLRVKNKHVEFFRNLYLTFLEYDGNLLRRELFGCPSETDVNNENLQKQLSELDEDDLCYEFRRERFTVHRTHLYFLHYEFEPSADNTDVTLVAQLSMDRLQMLEAICKHWEGPISLALYLSDAEAQQFLRYAQGSEVLMSRQNVGYHIVYKEGQFYPVNLLRNVAMKHISTPYMFLSDIDFLPMYGLYEYLRKSVIQLDLANTKKAMIVPAFETLRYRLSFPKSKAELLSMLDMGTLFTFRYHVWTKGHAPTNFAKWRTATTPYQVEWEADFEPYVVVRRDCPEYDRRFVGFGWNKVAHIMELDAQEYEFTVLPNAYMIHMPHAPSFDITKFRSNKQYRICLKTLKEEFQQDMSRRYGFAALKYLTAENNS.

Topologically, residues 1-10 (MLGICRGRRK) are cytoplasmic. Residues 11–31 (FLAASLTLLCIPAITWIYLFA) traverse the membrane as a helical; Signal-anchor for type II membrane protein segment. The Lumenal portion of the chain corresponds to 32–756 (GSFEDGKPVS…LKYLTAENNS (725 aa)). Disordered regions lie at residues 43–64 (SPLE…ERES) and 82–108 (QLSL…EEGT). Residues 44–58 (PLESQAHSPRYTASS) are compositionally biased toward polar residues. Positions 53-95 (RYTASSQRERESLEVRVREVEEENRALRRQLSLAQGQSPAHHR) form a coiled coil. Residues Asn97, Asn122, and Asn148 are each glycosylated (N-linked (GlcNAc...) asparagine). The tract at residues 138-413 (IHVAIVCAGY…FLEYDGNLLR (276 aa)) is xylosyltransferase activity. 2 residues coordinate Mn(2+): Asp242 and Asp244. An N-linked (GlcNAc...) asparagine glycan is attached at Asn272. Residues 414–756 (RELFGCPSET…LKYLTAENNS (343 aa)) form a glucuronyltransferase activity region. Mn(2+) is bound by residues Asp563 and Asp565.

In the C-terminal section; belongs to the glycosyltransferase 49 family. It in the N-terminal section; belongs to the glycosyltransferase 8 family. Interacts with DAG1 (via the N-terminal domain of alpha-DAG1); the interaction increases binding of DAG1 to laminin. Interacts with B4GAT1. Mn(2+) serves as cofactor. In terms of tissue distribution, ubiquitous. Highest expression in heart, diaphragm and brain, where it is especially found in cerebral cortex, hippocampus, and trigeminal ganglion.

The protein resides in the golgi apparatus membrane. The enzyme catalyses 3-O-[beta-D-GlcA-(1-&gt;3)-beta-D-Xyl-(1-&gt;4)-Rib-ol-P-Rib-ol-P-3-beta-D-GalNAc-(1-&gt;3)-beta-D-GlcNAc-(1-&gt;4)-(O-6-P-alpha-D-Man)]-Thr-[protein] + UDP-alpha-D-xylose = 3-O-[alpha-D-Xyl-(1-&gt;3)-beta-D-GlcA-(1-&gt;4)-beta-D-Xyl-(1-&gt;4)-Rib-ol-P-Rib-ol-P-3-beta-D-GalNAc-(1-&gt;3)-beta-D-GlcNAc-(1-&gt;4)-(O-6-P-alpha-D-Man)]-Thr-[protein] + UDP + H(+). The catalysed reaction is 3-O-{(1-&gt;[3)-alpha-D-Xyl-(1-&gt;3)-beta-D-GlcA-(1-&gt;](n)-4)-beta-D-Xyl-(1-&gt;4)-Rib-ol-P-Rib-ol-P-3-beta-D-GalNAc-(1-&gt;3)-beta-D-GlcNAc-(1-&gt;4)-O-6-P-alpha-D-Man}-L-Thr-[protein] + UDP-alpha-D-glucuronate = 3-O-{beta-D-GlcA-(1-&gt;[3)-alpha-D-Xyl-(1-&gt;3)-beta-D-GlcA-(1-&gt;](n)-4)-beta-D-Xyl-(1-&gt;4)-Rib-ol-P-Rib-ol-P-3-beta-D-GalNAc-(1-&gt;3)-beta-D-GlcNAc-(1-&gt;4)-O-6-P-alpha-D-Man}-L-Thr-[protein] + UDP + H(+). It carries out the reaction 3-O-{beta-D-GlcA-(1-&gt;[3)-alpha-D-Xyl-(1-&gt;3)-beta-D-GlcA-(1-&gt;](n)-4)-beta-D-Xyl-(1-&gt;4)-Rib-ol-P-Rib-ol-P-3-beta-D-GalNAc-(1-&gt;3)-beta-D-GlcNAc-(1-&gt;4)-O-6-P-alpha-D-Man}-L-Thr-[protein] + UDP-alpha-D-xylose = 3-O-{(1-&gt;[3)-alpha-D-Xyl-(1-&gt;3)-beta-D-GlcA-(1-&gt;](n+1)-4)-beta-D-Xyl-(1-&gt;4)-Rib-ol-P-Rib-ol-P-3-beta-D-GalNAc-(1-&gt;3)-beta-D-GlcNAc-(1-&gt;4)-O-6-P-alpha-D-Man}-L-Thr-[protein] + UDP + H(+). Its pathway is protein modification; protein glycosylation. In terms of biological role, bifunctional glycosyltransferase with both alpha-1,3-xylosyltransferase and beta-1,3-glucuronyltransferase activities involved in the maturation of alpha-dystroglycan (DAG1) by glycosylation leading to DAG1 binding to laminin G-like domain-containing extracellular proteins with high affinity. Elongates the glucuronyl-beta-1,4-xylose-beta disaccharide primer structure initiated by B4GAT1 by adding repeating units [-3-Xylose-alpha-1,3-GlcA-beta-1-] to produce a heteropolysaccharide. Requires the phosphorylation of core M3 (O-mannosyl trisaccharide) by POMK to elongate the glucuronyl-beta-1,4-xylose-beta disaccharide primer. Plays a key role in skeletal muscle function and regeneration. This Mus musculus (Mouse) protein is Xylosyl- and glucuronyltransferase LARGE1.